The primary structure comprises 152 residues: Ribosome maturation factor RimP (152 aa).

The protein belongs to the RimP family.

Its subcellular location is the cytoplasm. In terms of biological role, required for maturation of 30S ribosomal subunits. In Pectobacterium atrosepticum (strain SCRI 1043 / ATCC BAA-672) (Erwinia carotovora subsp. atroseptica), this protein is Ribosome maturation factor RimP.